The sequence spans 23 residues: Aurein-4.4 (23 aa).

This sequence belongs to the frog skin active peptide (FSAP) family. Aurein subfamily. Expressed by the skin dorsal glands.

Its subcellular location is the secreted. Functionally, has no antimicrobial or anticancer activity. The polypeptide is Aurein-4.4 (Ranoidea aurea (Green and golden bell frog)).